Consider the following 448-residue polypeptide: Iroquois-class homeodomain protein irx-3 (448 aa).

The segment at residues 108–170 (DPSRPKNATR…NARRRLKKEN (63 aa)) is a DNA-binding region (homeobox; TALE-type). Disordered stretches follow at residues 171-250 (KMTW…NAPE) and 387-410 (SGTASFPKAAEPKHSTDSLTDRSS). Over residues 195-222 (KHEDDEEIDLENIDTEDIESKEDLDDPD) the composition is skewed to acidic residues. The segment covering 223-237 (TDIHSDSKTDARSDS) has biased composition (basic and acidic residues). The span at 238-248 (EASDGFEDLNA) shows a compositional bias: acidic residues. Residues 396–406 (AEPKHSTDSLT) show a composition bias toward basic and acidic residues.

It belongs to the TALE/IRO homeobox family. Expressed in the neural plate in overlapping patterns with other irx members, which all share an anterior border of expression. Outside the nervous system and at tailbud stages, expressed in the developing otic vesicle, branchial arches, prospective heart region and pronephros.

Its subcellular location is the nucleus. Acts partially redundantly with other irx members in neural patterning. Required for formation of the posterior forebrain, midbrain, hindbrain, and to a lesser extent, spinal cord. Both up-regulates and down-regulates gene expression during neural development. Acts early in neural plate development to induce proneural gene expression and specify a neural precursor state. Also up-regulates repressors that prevent neuronal differentiation. Required during at least two stages of pronephros kidney development; during neurula stages, maintains transcription of key renal genes to define the size and identity of the pronephric anlage, probably in part through regulation of bmp-signaling. Subsequently required for proper formation of the intermediate tubule segment of the pronephros. The sequence is that of Iroquois-class homeodomain protein irx-3 from Xenopus tropicalis (Western clawed frog).